The sequence spans 485 residues: Argininosuccinate lyase (485 aa).

Belongs to the lyase 1 family. Argininosuccinate lyase subfamily.

The protein resides in the cytoplasm. The enzyme catalyses 2-(N(omega)-L-arginino)succinate = fumarate + L-arginine. It participates in amino-acid biosynthesis; L-arginine biosynthesis; L-arginine from L-ornithine and carbamoyl phosphate: step 3/3. The protein is Argininosuccinate lyase of Paracidovorax citrulli (strain AAC00-1) (Acidovorax citrulli).